A 92-amino-acid polypeptide reads, in one-letter code: uncharacterized protein (92 aa).

The HTH cro/C1-type domain maps to 25 to 83; the sequence is LEEKLKQEKIDRKYLAQVTNIPYTTVSRIMRAEANREFNPEIDTILKIAKYFNCTMDEV. The segment at residues 36–55 is a DNA-binding region (H-T-H motif); it reads RKYLAQVTNIPYTTVSRIMR.

This is an uncharacterized protein from Rickettsia prowazekii (strain Madrid E).